The chain runs to 752 residues: BCLAF1 and THRAP3 family member 3 (752 aa).

Residues 1–13 (MARSRSRSPRWKQ) are compositionally biased toward basic residues. Disordered regions lie at residues 1 to 114 (MARS…YMPT), 132 to 177 (PTVQ…QMSL), and 190 to 252 (DELR…DPAR). Serine 15 and serine 17 each carry phosphoserine. Basic and acidic residues predominate over residues 23–57 (FEYHEERHFHGHYDPEYRHDQQRPFTWRMDDEKHG). Phosphoserine is present on residues serine 78 and serine 80. Residues 85–109 (PVEKFDTYKPHQEYFPGRGDDDRRS) are compositionally biased toward basic and acidic residues. The segment covering 190 to 199 (DELRHQRVQE) has biased composition (basic and acidic residues). Phosphoserine is present on serine 205. 2 stretches are compositionally biased toward basic and acidic residues: residues 222 to 231 (RYPEDHDFRK) and 238 to 252 (RPTDAARYENRDPAR). Lysine 416 is covalently cross-linked (Glycyl lysine isopeptide (Lys-Gly) (interchain with G-Cter in SUMO2)). A Phosphoserine modification is found at serine 592.

The protein belongs to the BCLAF1/THRAP3 family.

Its subcellular location is the mitochondrion. The protein is BCLAF1 and THRAP3 family member 3 of Mus musculus (Mouse).